A 293-amino-acid chain; its full sequence is Undecaprenyl-diphosphatase (293 aa).

Transmembrane regions (helical) follow at residues 74-94 (VLVF…AGVF), 107-127 (WMII…KDLI), 134-154 (MWIT…AEKM), 209-229 (FLLA…DAFA), 243-263 (VGTL…MKFV), and 271-291 (FAAY…LGML).

It belongs to the UppP family.

It localises to the cell membrane. It carries out the reaction di-trans,octa-cis-undecaprenyl diphosphate + H2O = di-trans,octa-cis-undecaprenyl phosphate + phosphate + H(+). Catalyzes the dephosphorylation of undecaprenyl diphosphate (UPP). Confers resistance to bacitracin. The protein is Undecaprenyl-diphosphatase of Corynebacterium glutamicum (strain R).